Consider the following 208-residue polypeptide: Mediator of RNA polymerase II transcription subunit 21 (208 aa).

Residues 52–122 form a disordered region; sequence TKNSTAPPAP…PDSPRTFASR (71 aa). Positions 63-83 are enriched in low complexity; the sequence is GAPAGSQASPQQQSAQIPGQQ. Over residues 84–104 the composition is skewed to gly residues; it reads QQGGGDAGQTPGAGGGTGGAG. Positions 146-195 form a coiled coil; that stretch reads GIDSSEAEQERRIKELEKELRSAEEDREQRVRELRKLRKKLENVLGAVEV.

The protein belongs to the Mediator complex subunit 21 family. In terms of assembly, component of the Mediator complex.

The protein localises to the nucleus. In terms of biological role, component of the Mediator complex, a coactivator involved in the regulated transcription of nearly all RNA polymerase II-dependent genes. Mediator functions as a bridge to convey information from gene-specific regulatory proteins to the basal RNA polymerase II transcription machinery. Mediator is recruited to promoters by direct interactions with regulatory proteins and serves as a scaffold for the assembly of a functional preinitiation complex with RNA polymerase II and the general transcription factors. In Aspergillus oryzae (strain ATCC 42149 / RIB 40) (Yellow koji mold), this protein is Mediator of RNA polymerase II transcription subunit 21 (srb7).